The following is a 279-amino-acid chain: Putative pyruvate, phosphate dikinase regulatory protein (279 aa).

153–160 serves as a coordination point for ADP; sequence GISRTSKT.

The protein belongs to the pyruvate, phosphate/water dikinase regulatory protein family. PDRP subfamily.

The enzyme catalyses N(tele)-phospho-L-histidyl/L-threonyl-[pyruvate, phosphate dikinase] + ADP = N(tele)-phospho-L-histidyl/O-phospho-L-threonyl-[pyruvate, phosphate dikinase] + AMP + H(+). It carries out the reaction N(tele)-phospho-L-histidyl/O-phospho-L-threonyl-[pyruvate, phosphate dikinase] + phosphate + H(+) = N(tele)-phospho-L-histidyl/L-threonyl-[pyruvate, phosphate dikinase] + diphosphate. Its function is as follows. Bifunctional serine/threonine kinase and phosphorylase involved in the regulation of the pyruvate, phosphate dikinase (PPDK) by catalyzing its phosphorylation/dephosphorylation. This chain is Putative pyruvate, phosphate dikinase regulatory protein, found in Brucella melitensis biotype 2 (strain ATCC 23457).